The primary structure comprises 268 residues: Small ribosomal subunit protein uS2 (268 aa).

The protein belongs to the universal ribosomal protein uS2 family.

In Caulobacter vibrioides (strain ATCC 19089 / CIP 103742 / CB 15) (Caulobacter crescentus), this protein is Small ribosomal subunit protein uS2.